Reading from the N-terminus, the 490-residue chain is GTPase Der (490 aa).

2 consecutive EngA-type G domains span residues 3–166 and 196–369; these read PVIA…PRDE and IKIA…KSAV. GTP-binding positions include 9–16, 56–60, 118–121, 202–209, 249–253, and 314–317; these read GRPNVGKS, DTGGI, NKID, DTAGV, and NKWD. In terms of domain architecture, KH-like spans 370–454; sequence TRWPTSRLTQ…PIRIEFKGGE (85 aa). The tract at residues 452–490 is disordered; that stretch reads GGENPYEGNKNTLTDRQVNKKRRMMSHHKKADKKRRDKR. Residues 470 to 490 show a composition bias toward basic residues; sequence NKKRRMMSHHKKADKKRRDKR.

Belongs to the TRAFAC class TrmE-Era-EngA-EngB-Septin-like GTPase superfamily. EngA (Der) GTPase family. Associates with the 50S ribosomal subunit.

Its function is as follows. GTPase that plays an essential role in the late steps of ribosome biogenesis. The chain is GTPase Der from Pseudomonas syringae pv. syringae (strain B728a).